A 229-amino-acid chain; its full sequence is DNA mismatch repair protein MutH (229 aa).

It belongs to the MutH family.

It localises to the cytoplasm. Sequence-specific endonuclease that cleaves unmethylated GATC sequences. It is involved in DNA mismatch repair. This is DNA mismatch repair protein MutH from Escherichia coli O17:K52:H18 (strain UMN026 / ExPEC).